A 706-amino-acid polypeptide reads, in one-letter code: DNA helicase/primase complex-associated protein (706 aa).

The tract at residues 203-249 (CPGGDGGEEGDGAEGGDGGVGGAGDGAGAGGGSSGKPPAGKRGRPTR) is disordered. The span at 217–236 (GGDGGVGGAGDGAGAGGGSS) shows a compositional bias: gly residues.

Belongs to the herpesviridae HEPA family. In terms of assembly, associates with the primase and the helicase to form the helicase-primase complex. Interacts with the origin-binding protein. Interacts with the polymerase catalytic subunit.

It is found in the host nucleus. Functionally, component of the helicase/primase complex. Unwinds the DNA at the replication forks and generates single-stranded DNA for both leading and lagging strand synthesis. The primase synthesizes short RNA primers on the lagging strand that the polymerase presumably elongates using dNTPs. The primase-associated factor has no known catalytic activity in the complex and may serve to facilitate the formation of the replisome by directly interacting with the origin-binding protein and the polymerase. This chain is DNA helicase/primase complex-associated protein (40), found in Equus caballus (Horse).